A 477-amino-acid chain; its full sequence is 3-isopropylmalate dehydratase large subunit (477 aa).

[4Fe-4S] cluster-binding residues include Cys352, Cys413, and Cys416.

This sequence belongs to the aconitase/IPM isomerase family. LeuC type 1 subfamily. Heterodimer of LeuC and LeuD. Requires [4Fe-4S] cluster as cofactor.

The enzyme catalyses (2R,3S)-3-isopropylmalate = (2S)-2-isopropylmalate. The protein operates within amino-acid biosynthesis; L-leucine biosynthesis; L-leucine from 3-methyl-2-oxobutanoate: step 2/4. Catalyzes the isomerization between 2-isopropylmalate and 3-isopropylmalate, via the formation of 2-isopropylmaleate. The chain is 3-isopropylmalate dehydratase large subunit from Pseudomonas putida (strain W619).